A 231-amino-acid chain; its full sequence is UMP-CMP kinase (231 aa).

57-62 (GSGKGT) lines the ATP pocket. Positions 77-106 (SAGDLLRREIASGSAYGSVILSTIREGKIV) are NMP. A ribonucleoside 5'-phosphate contacts are provided by residues Arg-83, 104-106 (KIV), and 131-134 (GFPR). Asn-138 provides a ligand contact to CMP. The LID stretch occupies residues 169 to 177 (NRNQGRVDD). Arg-170 serves as a coordination point for ATP. Positions 174 and 185 each coordinate a ribonucleoside 5'-phosphate. Residue Gly-213 participates in ATP binding.

Belongs to the adenylate kinase family. UMP-CMP kinase subfamily. As to quaternary structure, monomer. Mg(2+) serves as cofactor.

The protein resides in the cytoplasm. The protein localises to the nucleus. It carries out the reaction CMP + ATP = CDP + ADP. The catalysed reaction is dCMP + ATP = dCDP + ADP. It catalyses the reaction UMP + ATP = UDP + ADP. In terms of biological role, catalyzes the phosphorylation of pyrimidine nucleoside monophosphates at the expense of ATP. Plays an important role in de novo pyrimidine nucleotide biosynthesis. Has preference for UMP and CMP as phosphate acceptors. The sequence is that of UMP-CMP kinase from Prunus armeniaca (Apricot).